Reading from the N-terminus, the 198-residue chain is NADH-quinone oxidoreductase subunit B (198 aa).

The [4Fe-4S] cluster site is built by C62, C63, C128, and C158.

The protein belongs to the complex I 20 kDa subunit family. In terms of assembly, NDH-1 is composed of 14 different subunits. Subunits NuoB, C, D, E, F, and G constitute the peripheral sector of the complex. The cofactor is [4Fe-4S] cluster.

The protein resides in the cell inner membrane. It carries out the reaction a quinone + NADH + 5 H(+)(in) = a quinol + NAD(+) + 4 H(+)(out). In terms of biological role, NDH-1 shuttles electrons from NADH, via FMN and iron-sulfur (Fe-S) centers, to quinones in the respiratory chain. The immediate electron acceptor for the enzyme in this species is believed to be a menaquinone. Couples the redox reaction to proton translocation (for every two electrons transferred, four hydrogen ions are translocated across the cytoplasmic membrane), and thus conserves the redox energy in a proton gradient. The sequence is that of NADH-quinone oxidoreductase subunit B from Phocaeicola vulgatus (strain ATCC 8482 / DSM 1447 / JCM 5826 / CCUG 4940 / NBRC 14291 / NCTC 11154) (Bacteroides vulgatus).